Consider the following 113-residue polypeptide: Transcriptional regulator RamA (113 aa).

The 99-residue stretch at 9-107 (DTIVEWIDDN…NQPPGAYRKE (99 aa)) folds into the HTH araC/xylS-type domain. DNA-binding regions (H-T-H motif) lie at residues 26-47 (DDIARHAGYSKWHLQRLFLQYK) and 74-97 (VYDICLKYGFDSQQTFTRVFTRTF).

Monomer. Interacts with the C-terminus of RNAP subunit RpoA when part of class I or class II promoter complexes. Also interacts with sigma-70/RpoD in class II promoter complexes.

Its function is as follows. Transcriptional regulator. Binds to regulatory regions of target genes, including its own gene, efflux pump operon acrAB, antisense RNA gene micF, and various genes involved in lipid A biosynthesis, including lpxO and lpxL-2. Regulates expression of many genes, perhaps including its own; activates various lipid A biosynthetic genes, and as a result of activating acrAB, confers multidrug resistance. Plays a role in virulence and survival in host cells. This Klebsiella pneumoniae subsp. pneumoniae (strain HS11286) protein is Transcriptional regulator RamA.